The sequence spans 485 residues: Peptidyl-prolyl cis-trans isomerase-like 4 (485 aa).

The 172-residue stretch at 1–172 folds into the PPIase cyclophilin-type domain; it reads MSVLLETSAG…IDIRIKHTVI (172 aa). Residues 251–329 enclose the RRM domain; it reads NVLFVCKLNP…RRIHVDFSQS (79 aa). Residues 377 to 485 form a disordered region; that stretch reads NYRMVYGEEE…RDENDRRSRR (109 aa). Positions 426–485 are enriched in basic and acidic residues; it reads RPRDRSRDRYHKPRDDRRGDRRDRDRRDQDRNRYRDRDHRDRGREKDRYGRDENDRRSRR.

It belongs to the cyclophilin-type PPIase family. PPIL4 subfamily.

It localises to the nucleus. The catalysed reaction is [protein]-peptidylproline (omega=180) = [protein]-peptidylproline (omega=0). Its function is as follows. PPIases accelerate the folding of proteins. It catalyzes the cis-trans isomerization of proline imidic peptide bonds in oligopeptides. This is Peptidyl-prolyl cis-trans isomerase-like 4 (CYP6) from Gibberella zeae (strain ATCC MYA-4620 / CBS 123657 / FGSC 9075 / NRRL 31084 / PH-1) (Wheat head blight fungus).